We begin with the raw amino-acid sequence, 309 residues long: Taste receptor type 2 member 113 (309 aa).

Residues 1–8 (MVAVLQST) are Extracellular-facing. The chain crosses the membrane as a helical span at residues 9–29 (FAIIFSMEFIVGTLGNGFIIL). Topologically, residues 30–55 (MTCIDWVRRRKISLVDQILTALAITR) are cytoplasmic. The helical transmembrane segment at 56–76 (ITLILLVFIDWWVSVLFPALH) threads the bilayer. Over 77 to 101 (ETGKILRMYFISWTVINHCNLWLTA) the chain is Extracellular. Residues 102–122 (SLSIIYFLKIASFSSIIFLYL) form a helical membrane-spanning segment. The Cytoplasmic segment spans residues 123–127 (KFRVK). Residues 128 to 148 (NVVFVTLLVSLFFLFINTAIV) traverse the membrane as a helical segment. Residues 149–185 (NVYFDVCFDGVQRNVSQVSRLYNHEQICKFLSFTNPM) lie on the Extracellular side of the membrane. The N-linked (GlcNAc...) asparagine glycan is linked to asparagine 162. The helical transmembrane segment at 186-206 (FAFIPFVTSMATFFLLIFSLW) threads the bilayer. The Cytoplasmic segment spans residues 207-229 (RHLKNMKHNAEGCRDVSTIVHIR). The chain crosses the membrane as a helical span at residues 230–250 (ALQTIIVSVVLYSTFFLSFFV). Topologically, residues 251–262 (KVWSSGSPERYL) are extracellular. A helical transmembrane segment spans residues 263–283 (IFLFVWALGNAVLPAHTFVLI). Topologically, residues 284-309 (WGNCRLRWASLSLMLWLRYRFKNIDV) are cytoplasmic.

Belongs to the G-protein coupled receptor T2R family.

It is found in the membrane. Functionally, putative taste receptor which may play a role in the perception of bitterness. The polypeptide is Taste receptor type 2 member 113 (Rattus norvegicus (Rat)).